The sequence spans 880 residues: Xylosyltransferase oxt (880 aa).

Residues 1–14 (MEQSVSARWLRRYR) are Cytoplasmic-facing. The chain crosses the membrane as a helical; Signal-anchor for type II membrane protein span at residues 15–35 (PVLIILVLIFGIQLFLAYKSV). Residues 36–880 (DIGGGSGSGL…PKSDVDALLK (845 aa)) lie on the Lumenal side of the membrane. Disulfide bonds link cysteine 87-cysteine 115, cysteine 131-cysteine 469, cysteine 488-cysteine 501, and cysteine 490-cysteine 499. N-linked (GlcNAc...) asparagine glycosylation is found at asparagine 135 and asparagine 139. Residues 138 to 232 (ANVSLGCYRD…FYAMNIYETG (95 aa)) form the WSC domain. UDP-alpha-D-xylose contacts are provided by residues aspartate 287 and 316 to 318 (TIW). An N-linked (GlcNAc...) asparagine glycan is attached at asparagine 346. 419–420 (DW) contacts UDP-alpha-D-xylose. Residues serine 502 and 526–527 (RK) each bind UDP-alpha-D-xylose. N-linked (GlcNAc...) asparagine glycans are attached at residues asparagine 700 and asparagine 729. Cysteine 846 and cysteine 859 are disulfide-bonded.

Belongs to the glycosyltransferase 14 family. XylT subfamily. Ca(2+) is required as a cofactor. Mn(2+) serves as cofactor. Requires Mg(2+) as cofactor.

Its subcellular location is the endoplasmic reticulum membrane. The protein localises to the golgi apparatus membrane. It carries out the reaction UDP-alpha-D-xylose + L-seryl-[protein] = 3-O-(beta-D-xylosyl)-L-seryl-[protein] + UDP + H(+). It functions in the pathway glycan metabolism; chondroitin sulfate biosynthesis. It participates in glycan metabolism; heparan sulfate biosynthesis. In terms of biological role, catalyzes the first step in biosynthesis of glycosaminoglycan. Transfers D-xylose from UDP-D-xylose to specific serine residues of the core protein. This chain is Xylosyltransferase oxt, found in Drosophila pseudoobscura pseudoobscura (Fruit fly).